The chain runs to 164 residues: Transcription elongation factor GreA (164 aa).

The protein belongs to the GreA/GreB family.

Its function is as follows. Necessary for efficient RNA polymerase transcription elongation past template-encoded arresting sites. The arresting sites in DNA have the property of trapping a certain fraction of elongating RNA polymerases that pass through, resulting in locked ternary complexes. Cleavage of the nascent transcript by cleavage factors such as GreA or GreB allows the resumption of elongation from the new 3'terminus. GreA releases sequences of 2 to 3 nucleotides. The sequence is that of Transcription elongation factor GreA from Helicobacter pylori (strain J99 / ATCC 700824) (Campylobacter pylori J99).